The following is a 126-amino-acid chain: Phosphoribosyl-AMP cyclohydrolase (126 aa).

Aspartate 76 contributes to the Mg(2+) binding site. Cysteine 77 contacts Zn(2+). Mg(2+) contacts are provided by aspartate 78 and aspartate 80. Residues cysteine 94 and cysteine 101 each contribute to the Zn(2+) site.

Belongs to the PRA-CH family. Homodimer. Mg(2+) serves as cofactor. The cofactor is Zn(2+).

Its subcellular location is the cytoplasm. The catalysed reaction is 1-(5-phospho-beta-D-ribosyl)-5'-AMP + H2O = 1-(5-phospho-beta-D-ribosyl)-5-[(5-phospho-beta-D-ribosylamino)methylideneamino]imidazole-4-carboxamide. The protein operates within amino-acid biosynthesis; L-histidine biosynthesis; L-histidine from 5-phospho-alpha-D-ribose 1-diphosphate: step 3/9. Functionally, catalyzes the hydrolysis of the adenine ring of phosphoribosyl-AMP. This is Phosphoribosyl-AMP cyclohydrolase from Nitratidesulfovibrio vulgaris (strain ATCC 29579 / DSM 644 / CCUG 34227 / NCIMB 8303 / VKM B-1760 / Hildenborough) (Desulfovibrio vulgaris).